A 60-amino-acid polypeptide reads, in one-letter code: UPF0434 protein PM0859 (60 aa).

This sequence belongs to the UPF0434 family.

In Pasteurella multocida (strain Pm70), this protein is UPF0434 protein PM0859.